A 639-amino-acid polypeptide reads, in one-letter code: Probable potassium transport system protein Kup 1 (639 aa).

The next 12 membrane-spanning stretches (helical) occupy residues 27–47 (AILG…LYAF), 64–84 (VIGL…FKYI), 115–135 (VLIV…MITP), 151–171 (PAMD…LFAI), 182–202 (FFGP…LIHI), 225–245 (GFYG…AEAL), 261–281 (WFCL…ALVL), 293–313 (LMFP…ATII), 351–371 (IYLP…VLTF), 377–397 (LATA…LMFF), 408–428 (IWLA…FLGA), and 430–450 (LLKI…FTVI).

This sequence belongs to the HAK/KUP transporter (TC 2.A.72) family.

It is found in the cell inner membrane. The enzyme catalyses K(+)(in) + H(+)(in) = K(+)(out) + H(+)(out). Transport of potassium into the cell. Likely operates as a K(+):H(+) symporter. The polypeptide is Probable potassium transport system protein Kup 1 (Agrobacterium fabrum (strain C58 / ATCC 33970) (Agrobacterium tumefaciens (strain C58))).